We begin with the raw amino-acid sequence, 317 residues long: Probable cell division protein WhiA (317 aa).

A DNA-binding region (H-T-H motif) is located at residues 275–308; the sequence is SLKELGEMLVPKVGKSGVNHRMRKIDELAEKLEE.

Belongs to the WhiA family.

Involved in cell division and chromosome segregation. This Desulfitobacterium hafniense (strain Y51) protein is Probable cell division protein WhiA.